Reading from the N-terminus, the 636-residue chain is Threonine--tRNA ligase (636 aa).

The 61-residue stretch at Met-1–Thr-61 folds into the TGS domain. Residues Asp-243 to Pro-534 form a catalytic region. 3 residues coordinate Zn(2+): Cys-334, His-385, and His-511.

This sequence belongs to the class-II aminoacyl-tRNA synthetase family. As to quaternary structure, homodimer. Requires Zn(2+) as cofactor.

Its subcellular location is the cytoplasm. The enzyme catalyses tRNA(Thr) + L-threonine + ATP = L-threonyl-tRNA(Thr) + AMP + diphosphate + H(+). Functionally, catalyzes the attachment of threonine to tRNA(Thr) in a two-step reaction: L-threonine is first activated by ATP to form Thr-AMP and then transferred to the acceptor end of tRNA(Thr). Also edits incorrectly charged L-seryl-tRNA(Thr). In Colwellia psychrerythraea (strain 34H / ATCC BAA-681) (Vibrio psychroerythus), this protein is Threonine--tRNA ligase.